Consider the following 418-residue polypeptide: UDP-N-acetylglucosamine 1-carboxyvinyltransferase (418 aa).

22–23 (KN) lines the phosphoenolpyruvate pocket. Residue Arg91 coordinates UDP-N-acetyl-alpha-D-glucosamine. Cys115 functions as the Proton donor in the catalytic mechanism. A 2-(S-cysteinyl)pyruvic acid O-phosphothioketal modification is found at Cys115. UDP-N-acetyl-alpha-D-glucosamine is bound by residues Asp305 and Ile327.

Belongs to the EPSP synthase family. MurA subfamily.

Its subcellular location is the cytoplasm. The enzyme catalyses phosphoenolpyruvate + UDP-N-acetyl-alpha-D-glucosamine = UDP-N-acetyl-3-O-(1-carboxyvinyl)-alpha-D-glucosamine + phosphate. It functions in the pathway cell wall biogenesis; peptidoglycan biosynthesis. In terms of biological role, cell wall formation. Adds enolpyruvyl to UDP-N-acetylglucosamine. This Aeromonas salmonicida (strain A449) protein is UDP-N-acetylglucosamine 1-carboxyvinyltransferase.